Consider the following 305-residue polypeptide: Oligopeptide transport system permease protein OppC (305 aa).

6 consecutive transmembrane segments (helical) span residues 43-63 (AMVG…APMF), 105-125 (ISIF…VIWG), 166-185 (LFTI…ARIV), 212-232 (LFKH…TLTV), 236-256 (IFTE…LASW), and 274-294 (LFFP…VGDG). Positions 103 to 292 (ARISIFIGVA…ITMFGFNVVG (190 aa)) constitute an ABC transmembrane type-1 domain.

It belongs to the binding-protein-dependent transport system permease family. OppBC subfamily. The complex is composed of two ATP-binding proteins (OppD and OppF), two transmembrane proteins (OppB and OppC) and a solute-binding protein (OppA).

The protein localises to the cell membrane. Part of the ABC transporter complex OppABCDF involved in the uptake of oligopeptides. Probably responsible for the translocation of the substrate across the membrane. Required for sporulation and genetic competence. This Bacillus subtilis (strain 168) protein is Oligopeptide transport system permease protein OppC.